The chain runs to 422 residues: UDP-N-acetyl-D-glucosamine 6-dehydrogenase (422 aa).

The NAD(+) site is built by valine 14, aspartate 32, arginine 37, threonine 83, and threonine 118. Cysteine 258 (nucleophile) is an active-site residue. Position 329 (arginine 329) interacts with NAD(+).

It belongs to the UDP-glucose/GDP-mannose dehydrogenase family.

The catalysed reaction is UDP-N-acetyl-alpha-D-glucosamine + 2 NAD(+) + H2O = UDP-2-acetamido-2-deoxy-alpha-D-glucuronate + 2 NADH + 3 H(+). It functions in the pathway bacterial outer membrane biogenesis; LPS O-antigen biosynthesis. With respect to regulation, requires either potassium or ammonium-containing salts for activity. Dehydrogenase required for the biosynthesis of the B-band O antigen of serotype O6 lipopolysaccharide. Is also required for flagellin glycosylation. Catalyzes the conversion of UDP-N-acetylglucosamine (UDP-GlcNAc) to UDP-N-acetylglucosaminuronic acid (UDP-GlcNAcA). Can also catalyze the conversion of UDP-N-acetyl-galactosamine (UDP-GalNAc) to UDP-N-acetylgalactosaminuronic acid (UDP-GalNAcA), with low efficiency. Can use NAD(+) or NADP(+), with a preference for NAD(+). The chain is UDP-N-acetyl-D-glucosamine 6-dehydrogenase from Pseudomonas aeruginosa.